An 843-amino-acid polypeptide reads, in one-letter code: Protein PLASTID MOVEMENT IMPAIRED 1 (843 aa).

Positions 30-58 are enriched in polar residues; sequence PQVSVGNRRTNSLALPRSSVPSLVTSADE. Disordered stretches follow at residues 30 to 65 and 88 to 116; these read PQVSVGNRRTNSLALPRSSVPSLVTSADEVSTARAE and LEVEEEENVTQSNRIVKKPEESSSGSGVK. The C2 NT-type domain occupies 131–284; sequence LVRIGMQKLS…ELALKLGFQI (154 aa). 2 disordered regions span residues 300 to 412 and 450 to 472; these read FGMK…GTIG and MMKDESDGGDGETESQRLDEEEQ. The span at 307–336 shows a compositional bias: polar residues; sequence KPKNFANSFGRKQSKTSFSVPSPKMTSRSE. Phosphoserine occurs at positions 314 and 328. Residues 365–381 are compositionally biased toward basic and acidic residues; the sequence is PEEKPVQKNDKPEQRAE. Phosphothreonine is present on Thr404. Ser407 is modified (phosphoserine). Thr410 bears the Phosphothreonine mark. Positions 456–472 are enriched in acidic residues; sequence DGGDGETESQRLDEEEQ. Position 507 is a phosphoserine (Ser507).

In terms of tissue distribution, expressed in leaves, stems, cauline leaves, and flowers but not in roots. Present in leaves in both mesophyll and pavement cells.

The protein resides in the cytoplasm. Necessary for chloroplast and nuclear photorelocation movements via the regulation of chloroplast-actin (cp-actin) filaments in mesophyll cells, and together with PMIR1, in pavement cells. Required component for both the low- and high-light-dependent chloroplast movement responses via an abscisic acid (ABA) pathway. Involved in the ABA response pathway during seed germination. Modulates ABA accumulation during periods of water deficit at the seedling stage. The polypeptide is Protein PLASTID MOVEMENT IMPAIRED 1 (Arabidopsis thaliana (Mouse-ear cress)).